Consider the following 194-residue polypeptide: GTP cyclohydrolase 1 (194 aa).

Residues C85, H88, and C156 each contribute to the Zn(2+) site.

It belongs to the GTP cyclohydrolase I family. In terms of assembly, toroid-shaped homodecamer, composed of two pentamers of five dimers.

The enzyme catalyses GTP + H2O = 7,8-dihydroneopterin 3'-triphosphate + formate + H(+). Its pathway is cofactor biosynthesis; 7,8-dihydroneopterin triphosphate biosynthesis; 7,8-dihydroneopterin triphosphate from GTP: step 1/1. This is GTP cyclohydrolase 1 from Bacteroides fragilis (strain YCH46).